The chain runs to 108 residues: Putative disulfide oxidoreductase YuzD (108 aa).

An intrachain disulfide couples Cys-16 to Cys-19.

This is Putative disulfide oxidoreductase YuzD (yuzD) from Bacillus subtilis (strain 168).